Consider the following 519-residue polypeptide: Asteroid homolog 1 (519 aa).

The protein belongs to the asteroid family.

It localises to the cytoplasm. The protein localises to the mitochondrion. The protein is Asteroid homolog 1 (ast1) of Schizosaccharomyces pombe (strain 972 / ATCC 24843) (Fission yeast).